Reading from the N-terminus, the 302-residue chain is Pathogenicity locus probable regulatory protein HrpS (302 aa).

The Sigma-54 factor interaction domain occupies 9–237 (DDLDEERVPN…LKAAAKRHVL (229 aa)). Residues 37–44 (GETGTGKD) and 99–108 (AQGGTLYLDE) each bind ATP. Residues 279-298 (IDAASLELDMPRRTLYRRIK) constitute a DNA-binding region (H-T-H motif).

Functionally, member of the two-component regulatory system HrpR/HrpS that regulates the activation of the sigma factor hrpL which itself induces the expression of hprD as well as other hrp loci which are involved in plant pathogenicity, hrmA and avr genes. Probably interacts with sigma-54. The polypeptide is Pathogenicity locus probable regulatory protein HrpS (hrpS) (Pseudomonas savastanoi pv. phaseolicola (Pseudomonas syringae pv. phaseolicola)).